The sequence spans 114 residues: Probable non-functional T cell receptor beta variable 6-7 (114 aa).

The signal sequence occupies residues 1 to 21 (MSLGLLCCVAFSLLWAGPMNA). The Ig-like domain occupies 22–114 (GVTQTPKFHV…TSVYFCASSY (93 aa)). A disulfide bridge links Cys-42 with Cys-110. An N-linked (GlcNAc...) asparagine glycan is attached at Asn-84.

As to quaternary structure, alpha-beta TR is a heterodimer composed of an alpha and beta chain; disulfide-linked. The alpha-beta TR is associated with the transmembrane signaling CD3 coreceptor proteins to form the TR-CD3 (TcR or TCR). The assembly of alpha-beta TR heterodimers with CD3 occurs in the endoplasmic reticulum where a single alpha-beta TR heterodimer associates with one CD3D-CD3E heterodimer, one CD3G-CD3E heterodimer and one CD247 homodimer forming a stable octameric structure. CD3D-CD3E and CD3G-CD3E heterodimers preferentially associate with TR alpha and TR beta chains, respectively. The association of the CD247 homodimer is the last step of TcR assembly in the endoplasmic reticulum and is required for transport to the cell surface.

It is found in the cell membrane. Its function is as follows. Probable non-functional open reading frame (ORF) of V region of the variable domain of T cell receptor (TR) beta chain. Non-functional ORF generally cannot participate in the synthesis of a productive T cell receptor (TR) chain due to altered V-(D)-J or switch recombination and/or splicing site (at mRNA level) and/or conserved amino acid change (protein level). Alpha-beta T cell receptors are antigen specific receptors which are essential to the immune response and are present on the cell surface of T lymphocytes. Recognize peptide-major histocompatibility (MH) (pMH) complexes that are displayed by antigen presenting cells (APC), a prerequisite for efficient T cell adaptive immunity against pathogens. Binding of alpha-beta TR to pMH complex initiates TR-CD3 clustering on the cell surface and intracellular activation of LCK that phosphorylates the ITAM motifs of CD3G, CD3D, CD3E and CD247 enabling the recruitment of ZAP70. In turn ZAP70 phosphorylates LAT, which recruits numerous signaling molecules to form the LAT signalosome. The LAT signalosome propagates signal branching to three major signaling pathways, the calcium, the mitogen-activated protein kinase (MAPK) kinase and the nuclear factor NF-kappa-B (NF-kB) pathways, leading to the mobilization of transcription factors that are critical for gene expression and essential for T cell growth and differentiation. The T cell repertoire is generated in the thymus, by V-(D)-J rearrangement. This repertoire is then shaped by intrathymic selection events to generate a peripheral T cell pool of self-MH restricted, non-autoaggressive T cells. Post-thymic interaction of alpha-beta TR with the pMH complexes shapes TR structural and functional avidity. This Homo sapiens (Human) protein is Probable non-functional T cell receptor beta variable 6-7.